A 149-amino-acid polypeptide reads, in one-letter code: Protein AE7-like 2 (149 aa).

Belongs to the MIP18 family.

Functionally, may play a role in chromosome segregation through establishment of sister chromatid cohesion. Unable to complement ae7 mutants, and thus probably not involved in the cytosolic iron-sulfur assembly (CIA) pathway. The polypeptide is Protein AE7-like 2 (Arabidopsis thaliana (Mouse-ear cress)).